Reading from the N-terminus, the 473-residue chain is MKTDTPSLEIPQAARLRRRQLIRQLLERDKTPLAILFMAAVVGTLVGLAAVAFDKGVSWLQNQRMGALVHTADNYPLLLTVAFLCSAVLAMFGYFLVRKYAPEAGGSGIPEIEGALEDQRPVRWWRVLPVKFFGGLGTLGGGMVLGREGPTVQIGGNIGRMVLDIFRLKGDEARHTLLATGAAAGLAAAFNAPLAGILFIIEEMRPQFRYTLISIKAVFIGVIMSTIMYRIFNHEVALIDVGKLSDAPLNTLWLYLILGIIFGIFGPIFNKWVLGMQDLLHRVHGGNITKWVIMGGAIGGLCGLLGFVAPATSGGGFNLIPIATAGNFSMGMLVFIFVARVITTLLCFSSGAPGGIFAPMLALGTVLGTAFGMVAVELFPQYHLEAGTFAIAGMGALLAASIRAPLTGIILVLEMTDNYQLILPMIITGLGATLLAQFTGGKPLYSAILARTLAKQEAEQLARSKAASASENT.

Topologically, residues 1–32 (MKTDTPSLEIPQAARLRRRQLIRQLLERDKTP) are cytoplasmic. Residues 33–69 (LAILFMAAVVGTLVGLAAVAFDKGVSWLQNQRMGALV) traverse the membrane as a helical segment. At 70 to 76 (HTADNYP) the chain is on the periplasmic side. A helical membrane pass occupies residues 77-100 (LLLTVAFLCSAVLAMFGYFLVRKY). Positions 106 to 110 (GSGIP) match the Selectivity filter part_1 motif. A chloride-binding site is contributed by S107. An intramembrane region (helical) is located at residues 109 to 116 (IPEIEGAL). Residues 117 to 123 (EDQRPVR) lie on the Cytoplasmic side of the membrane. The next 2 membrane-spanning stretches (helical) occupy residues 124-141 (WWRV…TLGG) and 148-166 (EGPT…LDIF). The Selectivity filter part_2 motif lies at 146–150 (GREGP). Topologically, residues 167–176 (RLKGDEARHT) are cytoplasmic. 2 intramembrane regions (helical) span residues 177 to 189 (LLAT…LAAA) and 193 to 201 (PLAGILFII). Residues 202–214 (EEMRPQFRYTLIS) lie on the Cytoplasmic side of the membrane. A helical transmembrane segment spans residues 215-232 (IKAVFIGVIMSTIMYRIF). Topologically, residues 233–252 (NHEVALIDVGKLSDAPLNTL) are periplasmic. The chain crosses the membrane as a helical span at residues 253–281 (WLYLILGIIFGIFGPIFNKWVLGMQDLLH). The Cytoplasmic portion of the chain corresponds to 282–287 (RVHGGN). The helical transmembrane segment at 288–309 (ITKWVIMGGAIGGLCGLLGFVA) threads the bilayer. The Periplasmic segment spans residues 310–329 (PATSGGGFNLIPIATAGNFS). 2 helical membrane passes run 330–349 (MGML…LCFS) and 355–376 (GIFA…MVAV). The Selectivity filter part_3 motif lies at 355-359 (GIFAP). Chloride-binding residues include I356 and F357. Residues 377–386 (ELFPQYHLEA) are Periplasmic-facing. The segment at residues 387-401 (GTFAIAGMGALLAAS) is an intramembrane region (helical). The note=Loop between two helices intramembrane region spans 402–404 (IRA). Residues 405 to 416 (PLTGIILVLEMT) constitute an intramembrane region (helical). The segment at residues 417–421 (DNYQL) is an intramembrane region (note=Loop between two helices). The chain crosses the membrane as a helical span at residues 422–438 (ILPMIITGLGATLLAQF). Over 439 to 473 (TGGKPLYSAILARTLAKQEAEQLARSKAASASENT) the chain is Cytoplasmic. Y445 lines the chloride pocket.

This sequence belongs to the chloride channel (TC 2.A.49) family. ClcA subfamily. Homodimer.

Its subcellular location is the cell inner membrane. It catalyses the reaction 2 chloride(in) + H(+)(out) = 2 chloride(out) + H(+)(in). Proton-coupled chloride transporter. Functions as antiport system and exchanges two chloride ions for 1 proton. Probably acts as an electrical shunt for an outwardly-directed proton pump that is linked to amino acid decarboxylation, as part of the extreme acid resistance (XAR) response. The sequence is that of H(+)/Cl(-) exchange transporter ClcA from Escherichia fergusonii (strain ATCC 35469 / DSM 13698 / CCUG 18766 / IAM 14443 / JCM 21226 / LMG 7866 / NBRC 102419 / NCTC 12128 / CDC 0568-73).